A 305-amino-acid chain; its full sequence is Sulfate adenylyltransferase subunit 2 (305 aa).

Belongs to the PAPS reductase family. CysD subfamily. As to quaternary structure, heterodimer composed of CysD, the smaller subunit, and CysN.

It catalyses the reaction sulfate + ATP + H(+) = adenosine 5'-phosphosulfate + diphosphate. Its pathway is sulfur metabolism; hydrogen sulfide biosynthesis; sulfite from sulfate: step 1/3. Functionally, with CysN forms the ATP sulfurylase (ATPS) that catalyzes the adenylation of sulfate producing adenosine 5'-phosphosulfate (APS) and diphosphate, the first enzymatic step in sulfur assimilation pathway. APS synthesis involves the formation of a high-energy phosphoric-sulfuric acid anhydride bond driven by GTP hydrolysis by CysN coupled to ATP hydrolysis by CysD. The sequence is that of Sulfate adenylyltransferase subunit 2 from Pseudomonas fluorescens (strain ATCC BAA-477 / NRRL B-23932 / Pf-5).